A 149-amino-acid polypeptide reads, in one-letter code: Large ribosomal subunit protein uL15 (149 aa).

Residues 1–54 (MSLKLHNLKPTPNSRPEKHRKGRGHAAGKGKQAGKGQSGQNKRKGHRLGFEGGQ) form a disordered region. Positions 17-28 (EKHRKGRGHAAG) are enriched in basic residues.

This sequence belongs to the universal ribosomal protein uL15 family. As to quaternary structure, part of the 50S ribosomal subunit.

Functionally, binds to the 23S rRNA. The chain is Large ribosomal subunit protein uL15 from Mycoplasmopsis synoviae (strain 53) (Mycoplasma synoviae).